A 156-amino-acid polypeptide reads, in one-letter code: Transcriptional repressor NrdR (156 aa).

The segment at 3 to 34 (CPFCGSMDTRVLDSRPTLDGTAIRRRRECSSC) is a zinc-finger region. Residues 49-139 (VLVVKKDGRR…VYRDFREVDQ (91 aa)) enclose the ATP-cone domain.

It belongs to the NrdR family. It depends on Zn(2+) as a cofactor.

Functionally, negatively regulates transcription of bacterial ribonucleotide reductase nrd genes and operons by binding to NrdR-boxes. The protein is Transcriptional repressor NrdR of Thermotoga maritima (strain ATCC 43589 / DSM 3109 / JCM 10099 / NBRC 100826 / MSB8).